Here is a 344-residue protein sequence, read N- to C-terminus: Anthranilate phosphoribosyltransferase (344 aa).

Residues G86, 89–90, T94, 96–99, 114–122, and S126 each bind 5-phospho-alpha-D-ribose 1-diphosphate; these read GD, NIST, and KHGNKSASG. G86 is an anthranilate binding site. S98 is a binding site for Mg(2+). Residue N117 participates in anthranilate binding. R172 is a binding site for anthranilate. Positions 231 and 232 each coordinate Mg(2+).

It belongs to the anthranilate phosphoribosyltransferase family. In terms of assembly, homodimer. Mg(2+) is required as a cofactor.

It carries out the reaction N-(5-phospho-beta-D-ribosyl)anthranilate + diphosphate = 5-phospho-alpha-D-ribose 1-diphosphate + anthranilate. It functions in the pathway amino-acid biosynthesis; L-tryptophan biosynthesis; L-tryptophan from chorismate: step 2/5. Catalyzes the transfer of the phosphoribosyl group of 5-phosphorylribose-1-pyrophosphate (PRPP) to anthranilate to yield N-(5'-phosphoribosyl)-anthranilate (PRA). The polypeptide is Anthranilate phosphoribosyltransferase (Prochlorococcus marinus (strain MIT 9301)).